The chain runs to 3462 residues: DNA-directed RNA polymerase subunit beta'' (3462 aa).

Residues C263, C335, C342, and C345 each coordinate Zn(2+). Residues 541–1085 (KIDDQELSSV…PNKIFSSNLF (545 aa)) are insert-1. The interval 1528–1585 (PQSANERKQILKKARQKLRLFPLNLNEKKNRFSSVTLDLLRDQTTLHKMQSCGEAESG) is insert-2. The interval 1602-1699 (KKITEIFTFC…FSKQMGNRLL (98 aa)) is insert-3. The tract at residues 1938–2168 (LKNKMNQSFS…SQASWILETN (231 aa)) is insert-4. The insert-5 stretch occupies residues 2320–2870 (NLVSGKLNFL…KKKIAKEGAF (551 aa)). The tract at residues 2972-3196 (SKSQRGWFHN…IGQLLRYGKE (225 aa)) is insert-6.

This sequence belongs to the RNA polymerase beta' chain family. RpoC2 subfamily. In terms of assembly, in plastids the minimal PEP RNA polymerase catalytic core is composed of four subunits: alpha, beta, beta', and beta''. When a (nuclear-encoded) sigma factor is associated with the core the holoenzyme is formed, which can initiate transcription. Zn(2+) is required as a cofactor.

The protein localises to the plastid. It is found in the chloroplast. It carries out the reaction RNA(n) + a ribonucleoside 5'-triphosphate = RNA(n+1) + diphosphate. Its function is as follows. DNA-dependent RNA polymerase catalyzes the transcription of DNA into RNA using the four ribonucleoside triphosphates as substrates. This is DNA-directed RNA polymerase subunit beta'' from Tupiella akineta (Green alga).